The following is a 38-amino-acid chain: Potassium channel toxin alpha-KTx 3.8 (38 aa).

Cystine bridges form between Cys8–Cys28, Cys14–Cys33, and Cys18–Cys35. The tract at residues 26–33 (GKCMNGKC) is interaction with Ca(2+)-activated K(+) channels.

As to expression, expressed by the venom gland.

The protein localises to the secreted. Potassium channel inhibitor. The polypeptide is Potassium channel toxin alpha-KTx 3.8 (Hottentotta tamulus sindicus (Scorpion)).